We begin with the raw amino-acid sequence, 341 residues long: HTH-type transcriptional repressor PurR (341 aa).

Residues 2–56 form the HTH lacI-type domain; sequence ATIKDVAKRAGVSTTTVSHVINKTRFVAEETKAAVRAAIKELHYSPSAVARSLKV. Positions 4–23 form a DNA-binding region, H-T-H motif; it reads IKDVAKRAGVSTTTVSHVIN. Residues 48–56 mediate DNA binding; it reads SAVARSLKV. Tyrosine 73, arginine 190, threonine 192, phenylalanine 221, and aspartate 275 together coordinate hypoxanthine.

As to quaternary structure, homodimer.

It functions in the pathway purine metabolism; purine nucleotide biosynthesis [regulation]. Functionally, is the main repressor of the genes involved in the de novo synthesis of purine nucleotides, regulating purB, purC, purEK, purF, purHD, purL, purMN and guaBA expression. PurR is allosterically activated to bind its cognate DNA by binding the purine corepressors, hypoxanthine or guanine, thereby effecting transcription repression. This Pectobacterium carotovorum subsp. carotovorum (strain PC1) protein is HTH-type transcriptional repressor PurR.